The chain runs to 223 residues: MKFVPCLLLVTLSCLGTLGQAPRQKQGSTGEEFHFQTGGRDSCTMRPSSLGQGAGEVWLRVDCRNTDQTYWCEYRGQPSMCQAFAADPKPYWNQALQELRRLHHACQGAPVLRPSVCREAGPQAHMQQVTSSLKGSPEPNQQPEAGTPSLRPKATVKLTEATQLGKDSMEELGKAKPTTRPTAKPTQPGPRPGGNEEAKKKAWEHCWKPFQALCAFLISFFRG.

The N-terminal stretch at 1–19 is a signal peptide; the sequence is MKFVPCLLLVTLSCLGTLG. The segment at 23–45 is disordered; the sequence is RQKQGSTGEEFHFQTGGRDSCTM. Intrachain disulfides connect cysteine 43–cysteine 63, cysteine 72–cysteine 106, and cysteine 81–cysteine 117. Residues 120–201 form a disordered region; sequence AGPQAHMQQV…PGGNEEAKKK (82 aa). The span at 125–144 shows a compositional bias: polar residues; that stretch reads HMQQVTSSLKGSPEPNQQPE. Low complexity predominate over residues 175–186; the sequence is AKPTTRPTAKPT. Cysteine 206 and cysteine 214 are joined by a disulfide.

This sequence belongs to the fibroblast growth factor-binding protein family. In terms of tissue distribution, expressed in serum, peripheral leukocytes and cytotoxic T-lymphocytes, but not in granulocytes and monocytes (at protein level).

It is found in the secreted. The protein localises to the extracellular space. The sequence is that of Fibroblast growth factor-binding protein 2 (FGFBP2) from Homo sapiens (Human).